Here is a 313-residue protein sequence, read N- to C-terminus: Porphobilinogen deaminase (313 aa).

S-(dipyrrolylmethanemethyl)cysteine is present on C242.

Belongs to the HMBS family. In terms of assembly, monomer. Dipyrromethane is required as a cofactor.

The catalysed reaction is 4 porphobilinogen + H2O = hydroxymethylbilane + 4 NH4(+). It functions in the pathway porphyrin-containing compound metabolism; protoporphyrin-IX biosynthesis; coproporphyrinogen-III from 5-aminolevulinate: step 2/4. Functionally, tetrapolymerization of the monopyrrole PBG into the hydroxymethylbilane pre-uroporphyrinogen in several discrete steps. This Pseudomonas syringae pv. tomato (strain ATCC BAA-871 / DC3000) protein is Porphobilinogen deaminase.